The chain runs to 242 residues: DNA repair protein RecO (242 aa).

The protein belongs to the RecO family.

Its function is as follows. Involved in DNA repair and RecF pathway recombination. This is DNA repair protein RecO from Paracoccus denitrificans (strain Pd 1222).